The following is a 320-amino-acid chain: Nucleotide-binding protein Pcryo_0127 (320 aa).

ATP is bound at residue 32 to 39; the sequence is GRSGSGKT. GTP is bound at residue 82 to 85; it reads DIRT.

This sequence belongs to the RapZ-like family.

In terms of biological role, displays ATPase and GTPase activities. This is Nucleotide-binding protein Pcryo_0127 from Psychrobacter cryohalolentis (strain ATCC BAA-1226 / DSM 17306 / VKM B-2378 / K5).